The sequence spans 256 residues: Triosephosphate isomerase (256 aa).

9 to 11 (NWK) lines the substrate pocket. The active-site Electrophile is His-96. The Proton acceptor role is filled by Glu-168. Substrate-binding positions include Ser-213 and 234 to 235 (GG).

This sequence belongs to the triosephosphate isomerase family. As to quaternary structure, homodimer.

It is found in the cytoplasm. It carries out the reaction D-glyceraldehyde 3-phosphate = dihydroxyacetone phosphate. It functions in the pathway carbohydrate biosynthesis; gluconeogenesis. Its pathway is carbohydrate degradation; glycolysis; D-glyceraldehyde 3-phosphate from glycerone phosphate: step 1/1. In terms of biological role, involved in the gluconeogenesis. Catalyzes stereospecifically the conversion of dihydroxyacetone phosphate (DHAP) to D-glyceraldehyde-3-phosphate (G3P). This Baumannia cicadellinicola subsp. Homalodisca coagulata protein is Triosephosphate isomerase.